A 214-amino-acid chain; its full sequence is Methyltransferase HEMK2 (214 aa).

T29, E51, G53, D77, D103, L104, and N122 together coordinate S-adenosyl-L-methionine. N122 is an a protein binding site.

Belongs to the eukaryotic/archaeal PrmC-related family. Heterodimer; heterodimerization with TRMT112 is required for S-adenosyl-L-methionine-binding. Ubiquitinated, leading to its degradation by the proteasome. Highly expressed in undifferentiated embryonic stem cells (at protein level). Also expressed in testis and brain, weakly expressed in differentiated embryonic stem cells and kidney. Not expressed in muscle, heart, placenta, pancreas, lung and stomach.

It is found in the nucleus. It catalyses the reaction L-lysyl-[histone] + S-adenosyl-L-methionine = N(6)-methyl-L-lysyl-[histone] + S-adenosyl-L-homocysteine + H(+). The catalysed reaction is L-glutaminyl-[protein] + S-adenosyl-L-methionine = N(5)-methyl-L-glutaminyl-[protein] + S-adenosyl-L-homocysteine + H(+). It carries out the reaction methylarsonous acid + S-adenosyl-L-methionine = dimethylarsinate + S-adenosyl-L-homocysteine + 2 H(+). In terms of biological role, methyltransferase that can methylate proteins and, to a lower extent, arsenic. Catalytic subunit of a heterodimer with TRMT112, which monomethylates 'Lys-12' of histone H4 (H4K12me1), a modification present at the promoters of numerous genes encoding cell cycle regulators. Catalytic subunit of a heterodimer with TRMT112, which catalyzes N5-methylation of Glu residue of proteins with a Gly-Gln-Xaa-Xaa-Xaa-Arg motif. Methylates ETF1 on 'Gln-185'; ETF1 needs to be complexed to ERF3 in its GTP-bound form to be efficiently methylated. May also play a role in the modulation of arsenic-induced toxicity by mediating the conversion of monomethylarsonous acid (3+) into the less toxic dimethylarsonic acid. It however only plays a limited role in arsenic metabolism compared with AS3MT. The protein is Methyltransferase HEMK2 of Mus musculus (Mouse).